A 214-amino-acid chain; its full sequence is Phosphatidylserine decarboxylase proenzyme (214 aa).

Residue serine 182 is the Schiff-base intermediate with substrate; via pyruvic acid of the active site. Serine 182 is subject to Pyruvic acid (Ser); by autocatalysis.

The protein belongs to the phosphatidylserine decarboxylase family. PSD-A subfamily. Heterodimer of a large membrane-associated beta subunit and a small pyruvoyl-containing alpha subunit. Requires pyruvate as cofactor. Is synthesized initially as an inactive proenzyme. Formation of the active enzyme involves a self-maturation process in which the active site pyruvoyl group is generated from an internal serine residue via an autocatalytic post-translational modification. Two non-identical subunits are generated from the proenzyme in this reaction, and the pyruvate is formed at the N-terminus of the alpha chain, which is derived from the carboxyl end of the proenzyme. The post-translation cleavage follows an unusual pathway, termed non-hydrolytic serinolysis, in which the side chain hydroxyl group of the serine supplies its oxygen atom to form the C-terminus of the beta chain, while the remainder of the serine residue undergoes an oxidative deamination to produce ammonia and the pyruvoyl prosthetic group on the alpha chain.

Its subcellular location is the cell membrane. It catalyses the reaction a 1,2-diacyl-sn-glycero-3-phospho-L-serine + H(+) = a 1,2-diacyl-sn-glycero-3-phosphoethanolamine + CO2. Its pathway is phospholipid metabolism; phosphatidylethanolamine biosynthesis; phosphatidylethanolamine from CDP-diacylglycerol: step 2/2. In terms of biological role, catalyzes the formation of phosphatidylethanolamine (PtdEtn) from phosphatidylserine (PtdSer). This Burkholderia vietnamiensis (strain G4 / LMG 22486) (Burkholderia cepacia (strain R1808)) protein is Phosphatidylserine decarboxylase proenzyme.